The following is a 53-amino-acid chain: UPF0391 membrane protein Acid_3618 (53 aa).

The next 2 membrane-spanning stretches (helical) occupy residues 6 to 26 (LVFL…LAGA) and 28 to 48 (VGIA…AFLM).

It belongs to the UPF0391 family.

It localises to the cell membrane. The chain is UPF0391 membrane protein Acid_3618 from Solibacter usitatus (strain Ellin6076).